Reading from the N-terminus, the 266-residue chain is Chymotrypsin-like elastase family member 1 (266 aa).

The N-terminal stretch at 1-16 (MLRFLVFASLVLCGHS) is a signal peptide. Positions 17-26 (TEDVPETDAR) are cleaved as a propeptide — activation peptide. The Peptidase S1 domain occupies 27 to 264 (VVGGAEARRN…YISWMNNVIA (238 aa)). A disulfide bridge links C56 with C72. H71 (charge relay system) is an active-site residue. 4 residues coordinate Ca(2+): E85, N87, Q90, and E95. A glycan (N-linked (GlcNAc...) asparagine) is linked at N87. Residue D119 is the Charge relay system of the active site. Cystine bridges form between C153/C220, C184/C200, and C210/C240. S214 (charge relay system) is an active-site residue.

It belongs to the peptidase S1 family. Elastase subfamily. It depends on Ca(2+) as a cofactor.

It is found in the secreted. It carries out the reaction Hydrolysis of proteins, including elastin. Preferential cleavage: Ala-|-Xaa.. Its function is as follows. Serine proteases that hydrolyze many proteins in addition to elastin. The chain is Chymotrypsin-like elastase family member 1 (Cela1) from Mus musculus (Mouse).